Reading from the N-terminus, the 262-residue chain is Tropinone reductase homolog At2g30670 (262 aa).

13–37 contacts NADP(+); that stretch reads LVTGGASGIGHAIVEELAGLGARIY. Substrate is bound at residue Ser146. The Proton acceptor role is filled by Tyr159.

Belongs to the short-chain dehydrogenases/reductases (SDR) family. SDR65C subfamily.

This Arabidopsis thaliana (Mouse-ear cress) protein is Tropinone reductase homolog At2g30670.